Reading from the N-terminus, the 320-residue chain is Ino eighty subunit 2 (320 aa).

2 stretches are compositionally biased toward acidic residues: residues 1-12 (MDSEASDIEAEL) and 22-35 (EYIDDDDYTEDIDD). Disordered regions lie at residues 1 to 232 (MDSE…SKKK) and 244 to 306 (ENAR…EGMT). Residues 42–59 (SSRRTARRSVPKGVRTSK) are compositionally biased toward basic residues. Ser-67 carries the phosphoserine modification. Over residues 68 to 80 (VEVDEDYDEEEDV) the composition is skewed to acidic residues. Residues 105–116 (EKSDIGDSKGND) are compositionally biased toward basic and acidic residues. Residues 117–130 (GEIEDGILEEEESL) show a composition bias toward acidic residues. Ser-129 carries the post-translational modification Phosphoserine. Basic and acidic residues predominate over residues 131-147 (EKELNRGGGKEVEKSEE). The span at 161 to 174 (EEQDGESGGYEDNE) shows a compositional bias: acidic residues. Positions 207–217 (TDSTRSTTTRS) are enriched in low complexity. A compositionally biased stretch (basic and acidic residues) spans 244-264 (ENARKRKNLSEKRLEEEKQDT). A compositionally biased stretch (basic residues) spans 268–278 (LLKKRAGKSRS).

It belongs to the IES2 family. As to quaternary structure, component of the chromatin-remodeling INO80 complex, at least composed of ARP4, ARP5, ARP8, RVB1, RVB2, TAF14, NHP10, IES1, IES3, IES4, IES6, ACT1, IES2, IES5 and INO80.

It is found in the nucleus. In terms of biological role, component of the INO80 complex which remodels chromatin by shifting nucleosomes and is involved in DNA repair. The polypeptide is Ino eighty subunit 2 (IES2) (Saccharomyces cerevisiae (strain ATCC 204508 / S288c) (Baker's yeast)).